The primary structure comprises 220 residues: Charged multivesicular body protein 3 (220 aa).

Gly2 carries the N-myristoyl glycine lipid modification. Positions 22–54 (KIRKEMRVIDRQIRDIQREQEKVKRSIKESAKK) form a coiled coil. An important for autoinhibitory function region spans residues 168–169 (IL). The segment at 181 to 220 (PSKVTDALPEPEITGAMAASDEEEEEDLEAMHSRLAALRS) is disordered. The MIT-interacting motif motif lies at 201–209 (DEEEEEDLE). Interaction with STAMBP stretches follow at residues 203–207 (EEEED) and 219–220 (RS).

This sequence belongs to the SNF7 family. As to quaternary structure, probable core component of the endosomal sorting required for transport complex III (ESCRT-III). ESCRT-III components are thought to multimerize to form a flat lattice on the perimeter membrane of the endosome. Several assembly forms of ESCRT-III may exist that interact and act sequentially.

The protein localises to the cytoplasm. It localises to the cytosol. Its subcellular location is the membrane. It is found in the endosome. The protein resides in the late endosome membrane. Functionally, probable core component of the endosomal sorting required for transport complex III (ESCRT-III) which is involved in multivesicular bodies (MVBs) formation and sorting of endosomal cargo proteins into MVBs. MVBs contain intraluminal vesicles (ILVs) that are generated by invagination and scission from the limiting membrane of the endosome and mostly are delivered to lysosomes enabling degradation of membrane proteins, such as stimulated growth factor receptors, lysosomal enzymes and lipids. Involved in late stages of cytokinesis. Plays a role in endosomal sorting/trafficking of EGF receptor. This is Charged multivesicular body protein 3 (chmp3) from Xenopus laevis (African clawed frog).